Reading from the N-terminus, the 547-residue chain is NADH-ubiquinone oxidoreductase chain 5 (547 aa).

15 helical membrane-spanning segments follow: residues 3–23, 45–65, 80–100, 101–121, 132–152, 198–218, 227–247, 264–284, 319–339, 352–372, 399–419, 430–450, 460–477, 485–505, and 512–532; these read ISIF…IFFV, YFNS…VLVF, YFML…SGCF, SMLV…LFYN, TVLT…STIF, ISSL…IMNF, VIMI…MAAL, MGFS…IHLL, VPYF…GLVF, FFFS…SVFL, VVMN…IWWM, FLYV…VVGF, FVYK…VYGL, LFLG…GFWS, and LYFN…WGCI.

Belongs to the complex I subunit 5 family.

The protein localises to the mitochondrion inner membrane. The catalysed reaction is a ubiquinone + NADH + 5 H(+)(in) = a ubiquinol + NAD(+) + 4 H(+)(out). Functionally, core subunit of the mitochondrial membrane respiratory chain NADH dehydrogenase (Complex I) that is believed to belong to the minimal assembly required for catalysis. Complex I functions in the transfer of electrons from NADH to the respiratory chain. The immediate electron acceptor for the enzyme is believed to be ubiquinone. This chain is NADH-ubiquinone oxidoreductase chain 5 (ND5), found in Ascaris suum (Pig roundworm).